The following is a 263-amino-acid chain: S-methyl-5'-thioadenosine phosphorylase (263 aa).

Residues T13, 55–56, and 88–89 contribute to the phosphate site; these read RH and SA. M186 contacts substrate. Residue T187 participates in phosphate binding. 210–212 contacts substrate; it reads DYD.

It belongs to the PNP/MTAP phosphorylase family. MTAP subfamily. In terms of assembly, homohexamer. Dimer of a homotrimer.

It carries out the reaction S-methyl-5'-thioadenosine + phosphate = 5-(methylsulfanyl)-alpha-D-ribose 1-phosphate + adenine. It functions in the pathway amino-acid biosynthesis; L-methionine biosynthesis via salvage pathway; S-methyl-5-thio-alpha-D-ribose 1-phosphate from S-methyl-5'-thioadenosine (phosphorylase route): step 1/1. Functionally, catalyzes the reversible phosphorylation of S-methyl-5'-thioadenosine (MTA) to adenine and 5-methylthioribose-1-phosphate. Involved in the breakdown of MTA, a major by-product of polyamine biosynthesis. Responsible for the first step in the methionine salvage pathway after MTA has been generated from S-adenosylmethionine. Has broad substrate specificity with 6-aminopurine nucleosides as preferred substrates. In Nitrosopumilus maritimus (strain SCM1), this protein is S-methyl-5'-thioadenosine phosphorylase.